The primary structure comprises 291 residues: MSALNWKPFVYGGLASITAECGTFPIDLTKTRLQIQGQTNDAKFREIRYRGMLHALMRIGREEGLRALYSGIAPAMLRQASYGTIKIGTYQSLKRLAVERPEDETLLINVVCGILSGVISSAIANPTDVLKIRMQAQNSAVQGGMIGNFISIYQQEGTRGLWKGVSLTAQRAAIVVGVELPVYDITKKHLILSGLMGDTVSTHFLSSFTCGLVGALASNPVDVVRTRMMNQRDLRDGRCSGYKGTLDCLLQTWKNEGFFALYKGFWPNWLRLGPWNIIFFLTYEQLKKLDL.

The residue at position 2 (S2) is an N-acetylserine. Solcar repeat units follow at residues 7–96, 104–189, and 198–289; these read KPFV…LKRL, ETLL…TKKH, and DTVS…LKKL. The next 6 helical transmembrane spans lie at 9-26, 71-89, 106-124, 164-183, 204-224, and 264-283; these read FVYG…TFPI, GIAP…KIGT, LLIN…SAIA, GVSL…LPVY, FLSS…VDVV, and GFWP…FLTY.

This sequence belongs to the mitochondrial carrier (TC 2.A.29) family. As to quaternary structure, interacts with VDAC1.

It is found in the mitochondrion inner membrane. The enzyme catalyses sulfite(in) + sulfate(out) = sulfite(out) + sulfate(in). It catalyses the reaction thiosulfate(in) + sulfate(out) = thiosulfate(out) + sulfate(in). The catalysed reaction is sulfate(out) + phosphate(in) = sulfate(in) + phosphate(out). It carries out the reaction oxalate(in) + sulfate(out) = oxalate(out) + sulfate(in). The enzyme catalyses malonate(in) + sulfate(out) = malonate(out) + sulfate(in). It catalyses the reaction maleate(in) + sulfate(out) = maleate(out) + sulfate(in). The catalysed reaction is (S)-malate(in) + sulfate(out) = (S)-malate(out) + sulfate(in). It carries out the reaction (3S)-citramalate(in) + sulfate(out) = (3S)-citramalate(out) + sulfate(in). The enzyme catalyses (3R)-citramalate(in) + sulfate(out) = (3R)-citramalate(out) + sulfate(in). It catalyses the reaction sulfate(out) + succinate(in) = sulfate(in) + succinate(out). The catalysed reaction is (S,S)-tartrate(in) + sulfate(out) = (S,S)-tartrate(out) + sulfate(in). It carries out the reaction (2R,3R)-tartrate(in) + sulfate(out) = (2R,3R)-tartrate(out) + sulfate(in). The enzyme catalyses D-aspartate(in) + sulfate(out) = D-aspartate(out) + sulfate(in). It catalyses the reaction L-aspartate(in) + sulfate(out) = L-aspartate(out) + sulfate(in). The catalysed reaction is sulfate(in) = sulfate(out). It carries out the reaction phosphate(in) = phosphate(out). The enzyme catalyses (S)-malate(out) = (S)-malate(in). Antiporter that transports inorganic anions (sulfate, sulfite, thiosulfate and phosphate) and, to a lesser extent, a variety of dicarboxylates (e.g. malonate, malate and citramalate) and, even more so, aspartate. The sulfate/sulfate exchange is much higher than the phosphate/phosphate and malate/malate exchanges. The transport affinities is higher for sulfate and thiosulfate than for any other substrate. May catalyze the export of sulfite and thiosulfate (the hydrogen sulfide degradation products) from the mitochondria, thereby modulating the level of the hydrogen sulfide. Also may mediate a very low unidirectional transport of sulfate, phosphate and (S)-malate. The protein is Kidney mitochondrial carrier protein 1 of Rattus norvegicus (Rat).